We begin with the raw amino-acid sequence, 235 residues long: tRNA pseudouridine synthase B (235 aa).

The active-site Nucleophile is the Asp45.

It belongs to the pseudouridine synthase TruB family. Type 1 subfamily.

It carries out the reaction uridine(55) in tRNA = pseudouridine(55) in tRNA. In terms of biological role, responsible for synthesis of pseudouridine from uracil-55 in the psi GC loop of transfer RNAs. This chain is tRNA pseudouridine synthase B, found in Chlamydia felis (strain Fe/C-56) (Chlamydophila felis).